The primary structure comprises 228 residues: Orotate phosphoribosyltransferase (228 aa).

Lysine 26 serves as a coordination point for 5-phospho-alpha-D-ribose 1-diphosphate. 34 to 35 contributes to the orotate binding site; that stretch reads FF. Residues 72-73, arginine 98, lysine 99, lysine 102, histidine 104, and 123-131 each bind 5-phospho-alpha-D-ribose 1-diphosphate; these read YK and DDVISAGTS. Residues serine 127 and arginine 155 each contribute to the orotate site.

It belongs to the purine/pyrimidine phosphoribosyltransferase family. PyrE subfamily. As to quaternary structure, homodimer. It depends on Mg(2+) as a cofactor.

It carries out the reaction orotidine 5'-phosphate + diphosphate = orotate + 5-phospho-alpha-D-ribose 1-diphosphate. It participates in pyrimidine metabolism; UMP biosynthesis via de novo pathway; UMP from orotate: step 1/2. In terms of biological role, catalyzes the transfer of a ribosyl phosphate group from 5-phosphoribose 1-diphosphate to orotate, leading to the formation of orotidine monophosphate (OMP). The polypeptide is Orotate phosphoribosyltransferase (Nitrosospira multiformis (strain ATCC 25196 / NCIMB 11849 / C 71)).